The following is a 212-amino-acid chain: Uridine kinase (212 aa).

13-20 (GASASGKS) serves as a coordination point for ATP.

Belongs to the uridine kinase family.

It is found in the cytoplasm. It catalyses the reaction uridine + ATP = UMP + ADP + H(+). It carries out the reaction cytidine + ATP = CMP + ADP + H(+). It functions in the pathway pyrimidine metabolism; CTP biosynthesis via salvage pathway; CTP from cytidine: step 1/3. Its pathway is pyrimidine metabolism; UMP biosynthesis via salvage pathway; UMP from uridine: step 1/1. The polypeptide is Uridine kinase (Shewanella frigidimarina (strain NCIMB 400)).